The primary structure comprises 39 residues: Photosystem II reaction center protein Psb30 (39 aa).

A helical transmembrane segment spans residues Ile12–Leu32.

Belongs to the Psb30/Ycf12 family. As to quaternary structure, PSII is composed of 1 copy each of membrane proteins PsbA, PsbB, PsbC, PsbD, PsbE, PsbF, PsbH, PsbI, PsbJ, PsbK, PsbL, PsbM, PsbT, PsbX, PsbY, PsbZ, Psb30/Ycf12, peripheral proteins PsbO, CyanoQ (PsbQ), PsbU, PsbV and a large number of cofactors. It forms dimeric complexes.

The protein localises to the cellular thylakoid membrane. Functionally, a core subunit of photosystem II (PSII), probably helps stabilize the reaction center. In Microcystis aeruginosa (strain NIES-843 / IAM M-2473), this protein is Photosystem II reaction center protein Psb30.